Reading from the N-terminus, the 213-residue chain is Ras-related protein Rab-4B (213 aa).

Ala2 is modified (N-acetylalanine). Residues Gly18, Thr19, Gly20, Lys21, Ser22, and Cys23 each coordinate GDP. Residues Gly18, Thr19, Gly20, Lys21, Ser22, Cys23, Ser37, His39, and Thr40 each coordinate GTP. Ser22 contacts Mg(2+). Residues 39-44 carry the Switch 1 motif; sequence HTIGVE. Mg(2+)-binding residues include Thr40 and Asp63. The Switch 2 motif lies at 65-74; sequence AGQERFRSVT. Gly66 provides a ligand contact to GTP. Position 67 is a 5-glutamyl serotonin (Gln67). Positions 121, 122, 124, 152, and 153 each coordinate GDP. Residues Asn121, Lys122, Asp124, Ala152, and Leu153 each coordinate GTP. 2 positions are modified to phosphoserine: Ser185 and Ser193. Residues Cys211 and Cys213 are each lipidated (S-geranylgeranyl cysteine). Cys213 carries the post-translational modification Cysteine methyl ester.

The protein belongs to the small GTPase superfamily. Rab family. As to quaternary structure, interacts (GTP-bound form) with RUFY1; the interaction allows endosomal tethering and fusion. Requires Mg(2+) as cofactor. In terms of processing, serotonylation of Gln-67 by TGM2 during activation and aggregation of platelets leads to constitutive activation of GTPase activity.

Its subcellular location is the cell membrane. The protein localises to the early endosome membrane. The catalysed reaction is GTP + H2O = GDP + phosphate + H(+). Its activity is regulated as follows. Regulated by guanine nucleotide exchange factors (GEFs) which promote the exchange of bound GDP for free GTP. Regulated by GTPase activating proteins (GAPs) which increase the GTP hydrolysis activity. Inhibited by GDP dissociation inhibitors (GDIs). Its function is as follows. The small GTPases Rab are key regulators of intracellular membrane trafficking, from the formation of transport vesicles to their fusion with membranes. Rabs cycle between an inactive GDP-bound form and an active GTP-bound form that is able to recruit to membranes different set of downstream effectors directly responsible for vesicle formation, movement, tethering and fusion. RAB4B mediates endosomal tethering and fusion through the interaction with RUFY1 and RAB14. Acts as a regulator of platelet alpha-granule release during activation and aggregation of platelets. This is Ras-related protein Rab-4B from Homo sapiens (Human).